Here is a 108-residue protein sequence, read N- to C-terminus: Gibberellin-regulated protein 7 (108 aa).

A signal peptide spans 1-23 (MKIIVSILVLASLLLISSSLASA).

It belongs to the GASA family. Six disulfide bonds may be present.

It is found in the secreted. Functionally, gibberellin-regulated protein that may function in hormonal controlled steps of development such as seed germination, flowering and seed maturation. This is Gibberellin-regulated protein 7 (GASA7) from Arabidopsis thaliana (Mouse-ear cress).